Here is an 812-residue protein sequence, read N- to C-terminus: DNA translocase FtsK 1 (812 aa).

Residues 1–11 (MTEKSHKKTAK) are compositionally biased toward basic residues. The segment at 1-36 (MTEKSHKKTAKGRAGSPSPTSARNKKADNGARGNKV) is disordered. The segment covering 25-36 (KKADNGARGNKV) has biased composition (basic and acidic residues). 5 helical membrane passes run 63 to 83 (IGDA…ISLI), 116 to 136 (VGYY…CVVL), 156 to 176 (IAAA…YFVL), 184 to 204 (LPVG…AWLL), and 210 to 230 (LLII…ISWL). The Cytoplasmic portion of the chain corresponds to 231–812 (EFLNGAGRAV…RKILAHKDHL (582 aa)). A FtsK domain is found at 461–670 (GTPVVGDLAK…FTVQSKIDSR (210 aa)). Residue 481–486 (GSGKSV) participates in ATP binding.

It belongs to the FtsK/SpoIIIE/SftA family. As to quaternary structure, homohexamer. Forms a ring that surrounds DNA.

The protein localises to the cell inner membrane. Essential cell division protein that coordinates cell division and chromosome segregation. The N-terminus is involved in assembly of the cell-division machinery. The C-terminus functions as a DNA motor that moves dsDNA in an ATP-dependent manner towards the dif recombination site, which is located within the replication terminus region. Translocation stops specifically at Xer-dif sites, where FtsK interacts with the Xer recombinase, allowing activation of chromosome unlinking by recombination. FtsK orienting polar sequences (KOPS) guide the direction of DNA translocation. FtsK can remove proteins from DNA as it translocates, but translocation stops specifically at XerCD-dif site, thereby preventing removal of XerC and XerD from dif. The protein is DNA translocase FtsK 1 (ftsK1) of Neisseria meningitidis serogroup B (strain ATCC BAA-335 / MC58).